The following is a 775-amino-acid chain: Polyribonucleotide nucleotidyltransferase (775 aa).

The disordered stretch occupies residues 223 to 247; the sequence is DEQVPEKPRKGRRRGRKSSPRKKTD. Residues 231–243 show a composition bias toward basic residues; sequence RKGRRRGRKSSPR. The Mg(2+) site is built by Asp-567 and Asp-573. Residues 633 to 692 enclose the KH domain; it reads PRITTISVPVSKIGEVIGPKGKNINQITEDTGARVSIEDDGTVFISATSGGSAEAAVDRI. One can recognise an S1 motif domain in the interval 704 to 773; sequence GERFLGTVVK…NRGKISLVPV (70 aa).

This sequence belongs to the polyribonucleotide nucleotidyltransferase family. The cofactor is Mg(2+).

The protein resides in the cytoplasm. It catalyses the reaction RNA(n+1) + phosphate = RNA(n) + a ribonucleoside 5'-diphosphate. Its function is as follows. Involved in mRNA degradation. Catalyzes the phosphorolysis of single-stranded polyribonucleotides processively in the 3'- to 5'-direction. The protein is Polyribonucleotide nucleotidyltransferase of Corynebacterium kroppenstedtii (strain DSM 44385 / JCM 11950 / CIP 105744 / CCUG 35717).